The sequence spans 564 residues: MIRQCVSHRGIPCYRLAVRRVELTEPFHHPSPRPLGRKNWSTSDEAKSKRAAMRKGGAPPPEHEDWELTVGIEIHAQLDTDAKLFSRASAALDDVPNSNIALFDIALPGSQPLFQPSTLIPAIRAAIALNCDIQRIRGQRIYELTHRLIEPYAKNGSIWLGAHDGIAKEDGEGVQIGIKQIQMEQDTAKSQELPSSTYLLDFNRVSRPLIEIITLPQIHSATTAAACVRKIQAILQSVGAVTTGMEMGGLRADVNVSVRKRSEAAGDHQYDGVAGLGQRTEIKNLSSFKAVEYAIIAERDRQIAVLKAGGTIQGETRGWTLGSTETRKLRGKEGEVDYRYMPDPDLGPVIIGDDVISDLRRNIPVLPDELLQMLVQDPKYGLSTVDAKTLIELDDGQRLEYYQDAVEILITLQPDLSADFSAGKVVGNWVLHELGGLLTKSSAHWDSQRVPAQSLAEIINLLSRKNITSSSAKSLLAMAFDGDKRSISQIVEDKNLLFQSLSRHEYIALAEEVMRQNPKMVSEIREKGQLGKMGWFVGQIKRIGDPNRVEAQKAEEILRELILK.

A mitochondrion-targeting transit peptide spans 1–88 (MIRQCVSHRG…DTDAKLFSRA (88 aa)). The segment at 26-63 (PFHHPSPRPLGRKNWSTSDEAKSKRAAMRKGGAPPPEH) is disordered.

It belongs to the GatB/GatE family. GatB subfamily. In terms of assembly, subunit of the heterotrimeric GatCAB amidotransferase (AdT) complex, composed of A, B and C subunits.

The protein resides in the mitochondrion. The enzyme catalyses L-glutamyl-tRNA(Gln) + L-glutamine + ATP + H2O = L-glutaminyl-tRNA(Gln) + L-glutamate + ADP + phosphate + H(+). In terms of biological role, allows the formation of correctly charged Gln-tRNA(Gln) through the transamidation of misacylated Glu-tRNA(Gln) in the mitochondria. The reaction takes place in the presence of glutamine and ATP through an activated gamma-phospho-Glu-tRNA(Gln). This Ajellomyces capsulatus (strain G186AR / H82 / ATCC MYA-2454 / RMSCC 2432) (Darling's disease fungus) protein is Glutamyl-tRNA(Gln) amidotransferase subunit B, mitochondrial.